Here is a 356-residue protein sequence, read N- to C-terminus: Histidinol-phosphate aminotransferase (356 aa).

Lys-214 carries the N6-(pyridoxal phosphate)lysine modification.

This sequence belongs to the class-II pyridoxal-phosphate-dependent aminotransferase family. Histidinol-phosphate aminotransferase subfamily. As to quaternary structure, homodimer. Pyridoxal 5'-phosphate serves as cofactor.

It carries out the reaction L-histidinol phosphate + 2-oxoglutarate = 3-(imidazol-4-yl)-2-oxopropyl phosphate + L-glutamate. Its pathway is amino-acid biosynthesis; L-histidine biosynthesis; L-histidine from 5-phospho-alpha-D-ribose 1-diphosphate: step 7/9. This chain is Histidinol-phosphate aminotransferase, found in Escherichia coli O1:K1 / APEC.